Here is a 481-residue protein sequence, read N- to C-terminus: UDP-N-acetylmuramate--L-alanine ligase (481 aa).

115–121 (GTHGKTT) is a binding site for ATP.

This sequence belongs to the MurCDEF family.

It localises to the cytoplasm. The enzyme catalyses UDP-N-acetyl-alpha-D-muramate + L-alanine + ATP = UDP-N-acetyl-alpha-D-muramoyl-L-alanine + ADP + phosphate + H(+). Its pathway is cell wall biogenesis; peptidoglycan biosynthesis. Its function is as follows. Cell wall formation. The chain is UDP-N-acetylmuramate--L-alanine ligase from Granulibacter bethesdensis (strain ATCC BAA-1260 / CGDNIH1).